Consider the following 295-residue polypeptide: Ribose-phosphate pyrophosphokinase (295 aa).

ATP-binding positions include aspartate 46–glutamate 48 and arginine 101–glutamine 102. Mg(2+) is bound by residues histidine 132 and aspartate 171. Lysine 194 is a catalytic residue. 2 residues coordinate D-ribose 5-phosphate: arginine 196 and aspartate 220.

This sequence belongs to the ribose-phosphate pyrophosphokinase family. Class III (archaeal) subfamily. Mg(2+) is required as a cofactor.

Its subcellular location is the cytoplasm. It carries out the reaction D-ribose 5-phosphate + ATP = 5-phospho-alpha-D-ribose 1-diphosphate + AMP + H(+). The protein operates within metabolic intermediate biosynthesis; 5-phospho-alpha-D-ribose 1-diphosphate biosynthesis; 5-phospho-alpha-D-ribose 1-diphosphate from D-ribose 5-phosphate (route I): step 1/1. Its function is as follows. Involved in the biosynthesis of the central metabolite phospho-alpha-D-ribosyl-1-pyrophosphate (PRPP) via the transfer of pyrophosphoryl group from ATP to 1-hydroxyl of ribose-5-phosphate (Rib-5-P). The protein is Ribose-phosphate pyrophosphokinase of Methanosarcina mazei (strain ATCC BAA-159 / DSM 3647 / Goe1 / Go1 / JCM 11833 / OCM 88) (Methanosarcina frisia).